We begin with the raw amino-acid sequence, 207 residues long: LexA repressor (207 aa).

The H-T-H motif DNA-binding region spans 28–48 (VREIGEAVGLASSFTVHGHLS). Residues S130 and K168 each act as for autocatalytic cleavage activity in the active site.

This sequence belongs to the peptidase S24 family. Homodimer.

It catalyses the reaction Hydrolysis of Ala-|-Gly bond in repressor LexA.. Represses a number of genes involved in the response to DNA damage (SOS response), including recA and lexA. In the presence of single-stranded DNA, RecA interacts with LexA causing an autocatalytic cleavage which disrupts the DNA-binding part of LexA, leading to derepression of the SOS regulon and eventually DNA repair. This is LexA repressor from Staphylococcus aureus (strain Newman).